The sequence spans 294 residues: 33 kDa chaperonin (294 aa).

2 disulfide bridges follow: Cys-238–Cys-240 and Cys-271–Cys-274.

Belongs to the HSP33 family. Under oxidizing conditions two disulfide bonds are formed involving the reactive cysteines. Under reducing conditions zinc is bound to the reactive cysteines and the protein is inactive.

The protein resides in the cytoplasm. Its function is as follows. Redox regulated molecular chaperone. Protects both thermally unfolding and oxidatively damaged proteins from irreversible aggregation. Plays an important role in the bacterial defense system toward oxidative stress. This Staphylococcus carnosus (strain TM300) protein is 33 kDa chaperonin.